The chain runs to 528 residues: J domain-containing protein APJ1 (528 aa).

Residues 4 to 73 form the J domain; the sequence is NTSLYDSLNV…RALYDQYGTT (70 aa). The segment at 193–274 adopts a CR-type zinc-finger fold; the sequence is GKTAKLGLNR…CQGLGFIKER (82 aa). 4 CXXCXGXG motif repeats span residues 206–213, 218–225, 246–253, and 262–269; these read CSVCDGHG, CTCKTCKG, CADCGGAG, and CQQCQGLG. Basic and acidic residues predominate over residues 485-499; sequence NERDSRKRNNRRFDE. The segment at 485 to 528 is disordered; sequence NERDSRKRNNRRFDESNINNNNETKRNKYSSPVSGFYDHDINGY.

It is found in the cytoplasm. It localises to the nucleus. Putative chaperone involved in protein folding. Interferes with propagation of [PSI+] prion when overproduced. The sequence is that of J domain-containing protein APJ1 (APJ1) from Saccharomyces cerevisiae (strain ATCC 204508 / S288c) (Baker's yeast).